A 303-amino-acid chain; its full sequence is D-alanine--D-alanine ligase (303 aa).

Positions Lys104–Glu300 constitute an ATP-grasp domain. Ile132–Ser187 is an ATP binding site. Mg(2+) contacts are provided by Asp254, Glu267, and Asn269.

This sequence belongs to the D-alanine--D-alanine ligase family. Mg(2+) is required as a cofactor. It depends on Mn(2+) as a cofactor.

The protein resides in the cytoplasm. It catalyses the reaction 2 D-alanine + ATP = D-alanyl-D-alanine + ADP + phosphate + H(+). It functions in the pathway cell wall biogenesis; peptidoglycan biosynthesis. In terms of biological role, cell wall formation. The protein is D-alanine--D-alanine ligase of Glaesserella parasuis serovar 5 (strain SH0165) (Haemophilus parasuis).